The primary structure comprises 487 residues: L-asparagine permease 2 (487 aa).

A run of 12 helical transmembrane segments spans residues 26–46, 50–70, 98–118, 133–153, 163–183, 214–234, 256–276, 290–310, 341–361, 369–389, 414–434, and 440–460; these read QLQMIALGGAIGTGLFLGAGG, SAGPGLFLVYGICGIFVFLIL, VAFVAGWMYFLNWAMTGIVDT, PIPQWTLALIALLVVLSMNLI, FWASLIKVIALVTFLIVGTVF, IVLVTSGVVFAYAAIELVGIA, IACFYVGSTVLLALLLPYTAY, IGIDAAGSVMNLVVLTAALSS, TGVPYGGILLTAGIGLLGIIL, AFEIVLHIAATGVIAAWATIV, SPFSGYLTLAFLAGVLILMYF, and PWMIAATVIGVPALIGGWYLV.

Belongs to the amino acid-polyamine-organocation (APC) superfamily. Amino acid transporter (AAT) (TC 2.A.3.1) family.

It is found in the cell membrane. Dual function in both nitrogen assimilation and in protection against acid stress during infection. Involved in asparagine uptake. The polypeptide is L-asparagine permease 2 (ansP2) (Mycobacterium bovis (strain ATCC BAA-935 / AF2122/97)).